The chain runs to 78 residues: Large ribosomal subunit protein eL20 (78 aa).

It belongs to the eukaryotic ribosomal protein eL20 family. In terms of assembly, part of the 50S ribosomal subunit. Binds 23S rRNA.

This is Large ribosomal subunit protein eL20 from Thermococcus sibiricus (strain DSM 12597 / MM 739).